The sequence spans 685 residues: MKTALVFAAVVAFVAARFPDHKDYKQLADKQFLAKQRDVLRLFHRVHQHNILNDQVEVGIPMTSKQTSATTVPPSGEAVHGVLQEGHARPRGEPFSVNYEKHREQAIMLYDLLYFANDYDTFYKTACWARDRVNEGMFMYSFSIAVFHRDDMQGVMLPPPYEVYPYLFVDHDVIHMAQKYWMKNAGSGEHHSHVIPVNFTLRTQDHLLAYFTSDVNLNAFNTYYRYYYPSWYNTTLYGHNIDRRGEQFYYTYKQIYARYFLERLSNDLPDVYPFYYSKPVKSAYNPNLRYHNGEEMPVRPSNMYVTNFDLYYIADIKNYEKRVEDAIDFGYAFDEHMKPHSLYHDVHGMEYLADMIEGNMDSPNFYFYGSIYHMYHSMIGHIVDPYHKMGLAPSLEHPETVLRDPVFYQLWKRVDHLFQKYKNRLPRYTHDELAFEGVKVENVDVGKLYTYFEQYDMSLDMAVYVNNVDQISNVDVQLAVRLNHKPFTYNIEVSSDKAQDVYVAVFLGPKYDYLGREYDLNDRRHYFVEMDRFPYHVGAGKTVIERNSHDSNIIAPERDSYRTFYKKVQEAYEGKSQYYVDKGHNYCGYPENLLIPKGKKGGQAYTFYVIVTPYVKQDEHDFEPYNYKAFSYCGVGSERKYPDNKPLGYPFDRKIYSNDFYTPNMYFKDVIIFHKKYDEVGVQGH.

Positions 1-16 (MKTALVFAAVVAFVAA) are cleaved as a signal peptide. N-linked (GlcNAc...) asparagine glycosylation occurs at Asn233.

The protein belongs to the hemocyanin family.

It is found in the secreted. The protein resides in the extracellular space. Its function is as follows. Larval storage protein (LSP) which may serve as a store of amino acids for synthesis of adult proteins. The chain is Allergen Cr-PI from Periplaneta americana (American cockroach).